Consider the following 400-residue polypeptide: CCA-adding enzyme (400 aa).

ATP-binding residues include Gly-32 and Arg-35. CTP is bound by residues Gly-32 and Arg-35. Residues Asp-45 and Asp-47 each coordinate Mg(2+). The ATP site is built by Arg-116, Asp-159, Arg-162, Arg-165, and Arg-168. CTP is bound by residues Arg-116, Asp-159, Arg-162, Arg-165, and Arg-168.

Belongs to the tRNA nucleotidyltransferase/poly(A) polymerase family. Bacterial CCA-adding enzyme type 3 subfamily. In terms of assembly, homodimer. Mg(2+) serves as cofactor.

It catalyses the reaction a tRNA precursor + 2 CTP + ATP = a tRNA with a 3' CCA end + 3 diphosphate. The enzyme catalyses a tRNA with a 3' CCA end + 2 CTP + ATP = a tRNA with a 3' CCACCA end + 3 diphosphate. Its function is as follows. Catalyzes the addition and repair of the essential 3'-terminal CCA sequence in tRNAs without using a nucleic acid template. Adds these three nucleotides in the order of C, C, and A to the tRNA nucleotide-73, using CTP and ATP as substrates and producing inorganic pyrophosphate. tRNA 3'-terminal CCA addition is required both for tRNA processing and repair. Also involved in tRNA surveillance by mediating tandem CCA addition to generate a CCACCA at the 3' terminus of unstable tRNAs. While stable tRNAs receive only 3'-terminal CCA, unstable tRNAs are marked with CCACCA and rapidly degraded. The polypeptide is CCA-adding enzyme (Limosilactobacillus fermentum (strain NBRC 3956 / LMG 18251) (Lactobacillus fermentum)).